The chain runs to 303 residues: tRNA dimethylallyltransferase (303 aa).

10-17 (GPTASGKS) is a binding site for ATP. 12 to 17 (TASGKS) contributes to the substrate binding site. An interaction with substrate tRNA region spans residues 35 to 38 (DSMQ).

Belongs to the IPP transferase family. In terms of assembly, monomer. Requires Mg(2+) as cofactor.

It catalyses the reaction adenosine(37) in tRNA + dimethylallyl diphosphate = N(6)-dimethylallyladenosine(37) in tRNA + diphosphate. Catalyzes the transfer of a dimethylallyl group onto the adenine at position 37 in tRNAs that read codons beginning with uridine, leading to the formation of N6-(dimethylallyl)adenosine (i(6)A). This chain is tRNA dimethylallyltransferase, found in Methylobacterium nodulans (strain LMG 21967 / CNCM I-2342 / ORS 2060).